We begin with the raw amino-acid sequence, 472 residues long: Alkaline phosphatase (472 aa).

The first 21 residues, 1 to 21 (MKQSAIALALLSCLITPVSQA), serve as a signal peptide directing secretion. Aspartate 74 is a Mg(2+) binding site. Residue aspartate 74 participates in Zn(2+) binding. Serine 125 acts as the Phosphoserine intermediate in catalysis. Positions 176 and 178 each coordinate Mg(2+). 2 cysteine pairs are disulfide-bonded: cysteine 191-cysteine 201 and cysteine 309-cysteine 359. Glutamate 345 serves as a coordination point for Mg(2+). Zn(2+) contacts are provided by aspartate 350, histidine 354, aspartate 392, histidine 393, and histidine 435.

The protein belongs to the alkaline phosphatase family. As to quaternary structure, homodimer. The cofactor is Mg(2+). It depends on Zn(2+) as a cofactor.

Its subcellular location is the periplasm. The enzyme catalyses a phosphate monoester + H2O = an alcohol + phosphate. This chain is Alkaline phosphatase (phoA), found in Escherichia fergusonii (strain ATCC 35469 / DSM 13698 / CCUG 18766 / IAM 14443 / JCM 21226 / LMG 7866 / NBRC 102419 / NCTC 12128 / CDC 0568-73).